A 296-amino-acid chain; its full sequence is Bidirectional sugar transporter SWEET13 (296 aa).

At 1 to 9 (MAGLSLQHP) the chain is on the extracellular side. The helical transmembrane segment at 10-30 (WAFAFGLLGNLISFTTYLAPI) threads the bilayer. Residues 13 to 98 (AFGLLGNLIS…VMYLAYAPKK (86 aa)) form the MtN3/slv 1 domain. The Cytoplasmic segment spans residues 31 to 45 (PTFYRIYKSKSTEGF). The helical transmembrane segment at 46–66 (QSVPYVVALFSAMLWIFYALI) threads the bilayer. At 67–71 (KSNEA) the chain is on the extracellular side. The chain crosses the membrane as a helical span at residues 72–92 (LLITINAAGCVIETIYIVMYL). The Cytoplasmic segment spans residues 93-105 (AYAPKKAKVFTTK). A helical transmembrane segment spans residues 106 to 126 (ILLLLNVGVFGVILLLTLLLS). At 127-133 (HGEQRVV) the chain is on the extracellular side. A helical transmembrane segment spans residues 134-154 (SLGWVCVAFSVSVFVAPLSII). Positions 134-217 (SLGWVCVAFS…MGLYVFYMNA (84 aa)) constitute a MtN3/slv 2 domain. Over 155 to 167 (KRVIQSRSVEYMP) the chain is Cytoplasmic. The chain crosses the membrane as a helical span at residues 168-188 (FSLSLTLTLSAVVWFLYGLLI). The Extracellular segment spans residues 189-192 (KDKY). A helical transmembrane segment spans residues 193-213 (VALPNILGFTFGVVQMGLYVF). The Cytoplasmic segment spans residues 214–296 (YMNATPVAGE…PPRAVEVAAV (83 aa)).

The protein belongs to the SWEET sugar transporter family. As to quaternary structure, forms homooligomers and/or heterooligomers.

It localises to the cell membrane. Functionally, mediates both low-affinity uptake and efflux of sugar across the plasma membrane. In terms of biological role, confers blight susceptibility. Confers TAL effector-mediated susceptibility to Xanthomonas oryzae pv. oryzae. The sequence is that of Bidirectional sugar transporter SWEET13 (SWEET13) from Oryza sativa subsp. japonica (Rice).